The sequence spans 457 residues: Cysteine--tRNA ligase (457 aa).

Cys28 contributes to the Zn(2+) binding site. The short motif at 30–40 (MTVYDYCHLGH) is the 'HIGH' region element. Positions 209, 234, and 238 each coordinate Zn(2+). Residues 266–270 (KMSKS) carry the 'KMSKS' region motif. Lys269 lines the ATP pocket.

Belongs to the class-I aminoacyl-tRNA synthetase family. In terms of assembly, monomer. Requires Zn(2+) as cofactor.

The protein resides in the cytoplasm. It catalyses the reaction tRNA(Cys) + L-cysteine + ATP = L-cysteinyl-tRNA(Cys) + AMP + diphosphate. This chain is Cysteine--tRNA ligase, found in Laribacter hongkongensis (strain HLHK9).